We begin with the raw amino-acid sequence, 290 residues long: Eukaryotic translation initiation factor 3 subunit F-2 (290 aa).

Residues 12–150 form the MPN domain; that stretch reads VRLQPLVLFQ…TRLYCGVTMG (139 aa).

It belongs to the eIF-3 subunit F family. Component of the eukaryotic translation initiation factor 3 (eIF-3) complex. The eIF-3 complex interacts with pix.

The protein localises to the cytoplasm. Functionally, component of the eukaryotic translation initiation factor 3 (eIF-3) complex, which is involved in protein synthesis of a specialized repertoire of mRNAs and, together with other initiation factors, stimulates binding of mRNA and methionyl-tRNAi to the 40S ribosome. The eIF-3 complex specifically targets and initiates translation of a subset of mRNAs involved in cell proliferation. The chain is Eukaryotic translation initiation factor 3 subunit F-2 from Drosophila virilis (Fruit fly).